The following is a 347-amino-acid chain: Protein RecA (347 aa).

80-87 is an ATP binding site; that stretch reads GPESSGKT.

This sequence belongs to the RecA family.

The protein resides in the cytoplasm. Its function is as follows. Can catalyze the hydrolysis of ATP in the presence of single-stranded DNA, the ATP-dependent uptake of single-stranded DNA by duplex DNA, and the ATP-dependent hybridization of homologous single-stranded DNAs. It interacts with LexA causing its activation and leading to its autocatalytic cleavage. The sequence is that of Protein RecA from Chlorobaculum parvum (strain DSM 263 / NCIMB 8327) (Chlorobium vibrioforme subsp. thiosulfatophilum).